The primary structure comprises 105 residues: 5-hydroxymethyl-dUMP N-hydrolase (105 aa).

5-hydroxymethyl-dUMP-binding residues include glycine 6, isoleucine 8, serine 42, glycine 44, glutamate 48, and serine 72.

It belongs to the 2'-deoxynucleoside 5'-phosphate N-hydrolase 1 family. Monomer and homodimer.

The protein resides in the cytoplasm. Its subcellular location is the nucleus. It catalyses the reaction 5-hydroxymethyl-dUMP + H2O = 5-hydroxymethyluracil + 2-deoxy-D-ribose 5-phosphate. Functionally, part of a nucleotide salvage pathway that eliminates epigenetically modified 5-hydroxymethyl-dCMP (hmdCMP) in a two-step process entailing deamination to cytotoxic 5-hydroxymethyl-dUMP (hmdUMP), followed by its hydrolysis into 5-hydroxymethyluracil (hmU) and 2-deoxy-D-ribose 5-phosphate (deoxyribosephosphate). Catalyzes the second step in that pathway, the hydrolysis of the N-glycosidic bond in hmdUMP, degrading this cytotoxic nucleotide to avoid its genomic integration. The protein is 5-hydroxymethyl-dUMP N-hydrolase of Branchiostoma floridae (Florida lancelet).